The sequence spans 213 residues: MSQKVLPTKINLIQFRRQLRLITVIKRLLENKREVLLLYLRTYASQYEKIYNEVNEEMKKVYESYLQAVASEGISNIEEMALSQKPSLEVNSAIKVIFGVKVPTIRLDKSTIPAKPFSDVETSPYLSESYEEMTEALNKIIELVELESTIRSLVSELRKTQRLINSIDNYILPFYRGSIKFIKQILEDRQREEFSRLKIIRRILQRRRESGSR.

The protein belongs to the V-ATPase D subunit family. In terms of assembly, has multiple subunits with at least A(3), B(3), C, D, E, F, H, I and proteolipid K(x).

The protein localises to the cell membrane. Functionally, component of the A-type ATP synthase that produces ATP from ADP in the presence of a proton gradient across the membrane. The sequence is that of A-type ATP synthase subunit D from Saccharolobus solfataricus (strain ATCC 35092 / DSM 1617 / JCM 11322 / P2) (Sulfolobus solfataricus).